A 78-amino-acid polypeptide reads, in one-letter code: Large ribosomal subunit protein uL23 (78 aa).

This sequence belongs to the universal ribosomal protein uL23 family. In terms of assembly, part of the 50S ribosomal subunit. Contacts protein L29.

Its function is as follows. Binds to 23S rRNA. One of the proteins that surrounds the polypeptide exit tunnel on the outside of the ribosome. The sequence is that of Large ribosomal subunit protein uL23 from Nanoarchaeum equitans (strain Kin4-M).